A 383-amino-acid chain; its full sequence is Izumo sperm-egg fusion protein 1 (383 aa).

The signal sequence occupies residues 1 to 21 (MGLHFTLLLAALANCLCPARL). Cystine bridges form between Cys22–Cys149, Cys25–Cys152, Cys135–Cys159, Cys139–Cys165, and Cys182–Cys233. Residues 22-306 (CIICDPFVVA…HRPEKKLKSR (285 aa)) are Extracellular-facing. Residues 148–160 (WCNKCEKQMHFCR) form an important for interaction with IZUMO1R region. Positions 167-251 (ERQIEVHRLE…PATIIYYHVT (85 aa)) constitute an Ig-like C2-type domain. Asn204 carries N-linked (GlcNAc...) asparagine glycosylation. A helical transmembrane segment spans residues 307–327 (LLILLILGFVVLVASVIASVL). Residues 328 to 383 (HFRKTRVKSKNSNVENKTSAAEFKSEAESPQKMGSRKLSQAEFHTDSSDKVEEADN) are Cytoplasmic-facing. Residues 335–383 (KSKNSNVENKTSAAEFKSEAESPQKMGSRKLSQAEFHTDSSDKVEEADN) form a disordered region. Residues 337–346 (KNSNVENKTS) are compositionally biased toward polar residues. Ser339, Ser346, and Ser366 each carry phosphoserine. The span at 370 to 383 (FHTDSSDKVEEADN) shows a compositional bias: basic and acidic residues. A Phosphothreonine modification is found at Thr372.

This sequence belongs to the Izumo family. In terms of assembly, monomer, homodimer; disulfide-linked and homooligomer; depending on the context. Interacts with IZUMO1R/JUNO. IZUMO1 and IZUMO1R/JUNO form a complex with 1:1 stoichiometry. In gamete recognition, IZUMO1R/JUNO first binds to monomeric IZUMO1. The weak, but specific interaction with IZUMO1R/JUNO induces IZUMO1 homodimerization. The process follows a tight binding phase where IZUMO1 bends the entire structure towards the sperm membrane side through a thiol-disulfide exchange reaction. The molecule no longer binds to IZUMO1R/JUNO and instead binds to a putative second oocyte receptor. Interacts with ACE3. Part of a oolemmal binding multimeric complex (IZUMO1 complex) composed at least of IZUMO1 and GLIPR1L1; the complex assemblage is influenced by the maturation status of the male germ cell. Interacts with GLIPR1L1. Interacts with FREY; the interaction retains IZUMO1 at the endoplasmic reticulum membrane and coordinates IZUMO1 complex assembly. Interacts with WDR54. Forms a complex with SPACA6 and TMEM81 on spermatocyte cell membrane. In terms of processing, N-glycosylated. Glycosylation is not essential for fusion and for proper protein trafficking in sperm. Post-translationally, phosphorylated. The cytoplasmic C-terminus is phosphorylated and undergoes phosphorylation changes during epididymal transit. Expressed in sperm (at protein level).

The protein localises to the cell membrane. The protein resides in the cytoplasmic vesicle. It localises to the secretory vesicle. Its subcellular location is the acrosome membrane. Its function is as follows. Essential sperm cell-surface protein required for fertilization by acting as a ligand for IZUMO1R/JUNO receptor on egg. The IZUMO1:IZUMO1R/JUNO interaction is a necessary adhesion event between sperm and egg that is required for fertilization but is not sufficient for cell fusion. The ligand-receptor interaction probably does not act as a membrane 'fusogen'. Plays a critical role in sperm-oolemma binding prior to plasma membrane fusion. Can mediate cell-cell fusion in cultured mammalian cells independently of its binding to IZUMO1R/JUNO. This chain is Izumo sperm-egg fusion protein 1, found in Rattus norvegicus (Rat).